A 194-amino-acid chain; its full sequence is Large ribosomal subunit protein bL9 (194 aa).

Positions 166–184 are enriched in low complexity; it reads AENQAQADEQAGELAAAAA. Residues 166-194 are disordered; that stretch reads AENQAQADEQAGELAAAAAERGDMGGDEE. The span at 185-194 shows a compositional bias: basic and acidic residues; sequence ERGDMGGDEE.

Belongs to the bacterial ribosomal protein bL9 family.

In terms of biological role, binds to the 23S rRNA. The chain is Large ribosomal subunit protein bL9 from Hyphomonas neptunium (strain ATCC 15444).